We begin with the raw amino-acid sequence, 116 residues long: UPF0342 protein LBA1592 (116 aa).

This sequence belongs to the UPF0342 family.

The sequence is that of UPF0342 protein LBA1592 from Lactobacillus acidophilus (strain ATCC 700396 / NCK56 / N2 / NCFM).